The sequence spans 319 residues: NADH-quinone oxidoreductase subunit H 1 (319 aa).

9 consecutive transmembrane segments (helical) span residues 1 to 21 (MIGL…LLVV), 77 to 97 (ILAP…VAFG), 107 to 127 (VGVL…MLGA), 147 to 167 (LAYE…AGSL), 179 to 199 (VWFV…GVAA), 214 to 234 (LVAG…FLGE), 238 to 258 (VLLV…GPWL), 262 to 282 (IWFG…RATL), and 293 to 313 (FAWK…GIVV).

The protein belongs to the complex I subunit 1 family. NDH-1 is composed of 14 different subunits. Subunits NuoA, H, J, K, L, M, N constitute the membrane sector of the complex.

The protein localises to the cell inner membrane. The enzyme catalyses a quinone + NADH + 5 H(+)(in) = a quinol + NAD(+) + 4 H(+)(out). NDH-1 shuttles electrons from NADH, via FMN and iron-sulfur (Fe-S) centers, to quinones in the respiratory chain. The immediate electron acceptor for the enzyme in this species is believed to be ubiquinone. Couples the redox reaction to proton translocation (for every two electrons transferred, four hydrogen ions are translocated across the cytoplasmic membrane), and thus conserves the redox energy in a proton gradient. This subunit may bind ubiquinone. The protein is NADH-quinone oxidoreductase subunit H 1 of Rhodopseudomonas palustris (strain HaA2).